A 360-amino-acid chain; its full sequence is UDP-N-acetylglucosamine--N-acetylmuramyl-(pentapeptide) pyrophosphoryl-undecaprenol N-acetylglucosamine transferase (360 aa).

2 residues coordinate UDP-N-acetyl-alpha-D-glucosamine: S198 and Q289.

Belongs to the glycosyltransferase 28 family. MurG subfamily.

It is found in the cell membrane. It carries out the reaction Mur2Ac(oyl-L-Ala-gamma-D-Glu-L-Lys-D-Ala-D-Ala)-di-trans,octa-cis-undecaprenyl diphosphate + UDP-N-acetyl-alpha-D-glucosamine = beta-D-GlcNAc-(1-&gt;4)-Mur2Ac(oyl-L-Ala-gamma-D-Glu-L-Lys-D-Ala-D-Ala)-di-trans,octa-cis-undecaprenyl diphosphate + UDP + H(+). It participates in cell wall biogenesis; peptidoglycan biosynthesis. In terms of biological role, cell wall formation. Catalyzes the transfer of a GlcNAc subunit on undecaprenyl-pyrophosphoryl-MurNAc-pentapeptide (lipid intermediate I) to form undecaprenyl-pyrophosphoryl-MurNAc-(pentapeptide)GlcNAc (lipid intermediate II). This chain is UDP-N-acetylglucosamine--N-acetylmuramyl-(pentapeptide) pyrophosphoryl-undecaprenol N-acetylglucosamine transferase, found in Streptococcus pyogenes serotype M3 (strain SSI-1).